The following is a 517-amino-acid chain: Glucose-6-phosphate isomerase (517 aa).

Glu345 functions as the Proton donor in the catalytic mechanism. Catalysis depends on residues His376 and Lys490.

The protein belongs to the GPI family.

It localises to the cytoplasm. It carries out the reaction alpha-D-glucose 6-phosphate = beta-D-fructose 6-phosphate. Its pathway is carbohydrate biosynthesis; gluconeogenesis. The protein operates within carbohydrate degradation; glycolysis; D-glyceraldehyde 3-phosphate and glycerone phosphate from D-glucose: step 2/4. Functionally, catalyzes the reversible isomerization of glucose-6-phosphate to fructose-6-phosphate. This chain is Glucose-6-phosphate isomerase, found in Erythrobacter litoralis (strain HTCC2594).